Consider the following 169-residue polypeptide: UPF0303 protein BOV_1367 (169 aa).

This sequence belongs to the UPF0303 family.

This is UPF0303 protein BOV_1367 from Brucella ovis (strain ATCC 25840 / 63/290 / NCTC 10512).